A 566-amino-acid chain; its full sequence is Erythroid membrane-associated protein (566 aa).

The first 29 residues, Met1–Gly29, serve as a signal peptide directing secretion. One can recognise an Ig-like V-type domain in the interval Asp30–Gln139. Topologically, residues Asp30 to Ala246 are extracellular. A disulfide bridge links Cys47 with Cys123. N-linked (GlcNAc...) asparagine glycosylation is found at Asn135 and Asn214. Residues Val247–Ile267 traverse the membrane as a helical segment. Residues Cys268 to Leu566 lie on the Cytoplasmic side of the membrane. The B30.2/SPRY domain maps to Lys311–Ser509. Ser509 carries the phosphoserine modification.

The protein belongs to the immunoglobulin superfamily. BTN/MOG family. Glycosylated. In terms of tissue distribution, expressed in spleen and bone marrow.

It localises to the cell membrane. Its subcellular location is the cytoplasm. In terms of biological role, possible role as a cell-adhesion or receptor molecule of erythroid cells. The polypeptide is Erythroid membrane-associated protein (Ermap) (Mus musculus (Mouse)).